The chain runs to 962 residues: MAFSVVLHQVTFLLAVLSLRTSQSKVLGEPLQLTPEIHTVSLQSALQEANLEWTVPTFSHQELNIVFQIEISRMRTSNTIWVGNYSTTVKHEETVHWKWTSDIPLECATHFIRIRAMVDDAQYPPQSSWSNWSSWKEVNAQVSVPPDTLLIFPEDRLLEEGSNVTICLMIGQNLYNVSCKLQEEPIRGEQLDSHLSLIKLNNVVFLNNAGTNINCKAMNGTKNTFGTVLFVSKVLEEPKNFSCETRDFKTLNCLWEPGIDTTLSWHKQRSQHYTLYESFSGRREVSNHRNSHTWQITEDSQETYNFTLTAENNLRKRSVSISFNLTHRVHPKAPHDVTLKTVGATKAHMTWKVPSRGDYTLLCQVELQCEGEVIHEHNVSVHTSANYLFSDLEPDTEYKACVRCASANHFWKWSDWMQKKFRTPEAAPSEALDVWRDVRTENGRHVVTLFWKPLLKSQANGKIISYNIVVENEANPTESEQYSVRAPALGTNLSLDLHPYKIHISANNSAGASPESLVVLSSHSGHEEVHEKTIKGIKNGFNISWEPVSGDAIGYVVDWCAHSQTQRCDLQWKNVGPNITSTIITSDAFEPGVRYNFRIFERSVEENVRLVEKQRGYTQELAPSVNPGVTIHNLTPNSFSLKWQDYASDFQSGFIKGYLVYLKSKELQCNPNWERTVLSDKSVLCKYDVDDPETKTLTVENLRPESLYEFLVTPYTSAGQGPNETYTKVTTPDVRSHMLLQIILPMTLGVFLSIIVCYWKSQWVKEKCYPDIPNPYKSSILSLIKSKKNPHLIMNVKDCIPDVLEVINKAEGSKTQCVGSGKLHTEDVPTKPPLVPTEKDSSGPMPFVFLENFTYDQSAFDSGSHGFIPGPLKNTPHQLGLLAPPNKLQNVLENDYMKSLVESPTEETSLIYVSQLASPICGDKDSLVTNPPMPVHGSEYKKQMALPGSLTSASLKENNLTS.

The signal sequence occupies residues 1-28 (MAFSVVLHQVTFLLAVLSLRTSQSKVLG). The Extracellular portion of the chain corresponds to 29 to 738 (EPLQLTPEIH…VTTPDVRSHM (710 aa)). N219 is a glycosylation site (N-linked (GlcNAc...) asparagine). Fibronectin type-III domains lie at 237–332 (EPKN…VHPK), 333–426 (APHD…TPEA), 428–527 (PSEA…SGHE), 528–621 (EVHE…TQEL), and 623–734 (PSVN…TPDV). C243 and C253 are oxidised to a cystine. N-linked (GlcNAc...) asparagine glycosylation is present at N324. Residues 413–417 (WSDWM) carry the WSXWS motif motif. Residues N492, N578, and N723 are each glycosylated (N-linked (GlcNAc...) asparagine). A helical transmembrane segment spans residues 739 to 759 (LLQIILPMTLGVFLSIIVCYW). The Cytoplasmic segment spans residues 760–962 (KSQWVKEKCY…ASLKENNLTS (203 aa)). The short motif at 768–776 (CYPDIPNPY) is the Box 1 motif element. A disordered region spans residues 818–840 (VGSGKLHTEDVPTKPPLVPTEKD).

It belongs to the type I cytokine receptor family. Type 2 subfamily. As to quaternary structure, heterodimer composed of OSMR and IL6ST (type II OSM receptor). Heterodimer with IL31RA to form the IL31 receptor. Widely expressed. Expressed at high levels in the liver, skin and spleen. In the liver it is expressed exclusively in the oval cells.

It is found in the membrane. Associates with IL31RA to form the IL31 receptor. Binds IL31 and activates STAT1, STAT3 and STAT5. Capable of transducing OSM-specific signaling events. The OSM/OSM-R system is pivotal in the differentiation of oval cells into hepatocytes, thereby promoting liver regeneration. The protein is Oncostatin-M-specific receptor subunit beta (Osmr) of Rattus norvegicus (Rat).